Reading from the N-terminus, the 403-residue chain is MRLSRLLIGASLGVALSSTVFTAALADVKFGSLYPISGSLALLGEESARGLELAVDEVNAAGGIKGEKVVLERGDAVDNNQATGEARRLISLVGVKAIFGTYSSARVIAASQVSELAGIPYFEMGAVADEVTGRGLQYLFRTNPTAENMAKDSVDMLIKGIAPGLGKDPKDMKIGIIYEDSSYGTSVAGHQEDNAKAAGLTVVLKSGYPSNTVDMSSLVLELREKGADVVMQTSYQNDSVLFLQQANEAGYKPLAIIGGGGGYSMQPTADAVGHDLIDGVFDADYTQYAVNTSATPGLTEFVEAYKAKYGSQPRSGHSLTNYVGAKAIFQALNAGEGFEPDQIVSAVKALDIPDGQAAAGYGVKFGKNNQNERATMMGMQWQDGKLVTVYPENAAIAKMRFKK.

The signal sequence occupies residues 1 to 26 (MRLSRLLIGASLGVALSSTVFTAALA).

The protein belongs to the leucine-binding protein family.

Functionally, component of an amino-acid transport system. This is Leu/Ile/Val-binding protein homolog 8 from Brucella melitensis biotype 1 (strain ATCC 23456 / CCUG 17765 / NCTC 10094 / 16M).